The primary structure comprises 273 residues: Flagellin FljN (273 aa).

The protein belongs to the bacterial flagellin family. In terms of assembly, in C.crescentus, the flagellar filament is composed of multiple flagellins of 29 kDa; 27 kDa and 25 kDa.

Its subcellular location is the secreted. It localises to the bacterial flagellum. Flagellin is the subunit protein which polymerizes to form the filaments of bacterial flagella. The chain is Flagellin FljN (fljN) from Caulobacter vibrioides (strain ATCC 19089 / CIP 103742 / CB 15) (Caulobacter crescentus).